A 432-amino-acid chain; its full sequence is Bifunctional protein GlmU (432 aa).

A pyrophosphorylase region spans residues 1–224 (MSEISVIILA…EENFMGINDK (224 aa)). Residues 9–12 (LAAG), lysine 23, and 82–83 (GT) contribute to the UDP-N-acetyl-alpha-D-glucosamine site. Residue aspartate 103 participates in Mg(2+) binding. The UDP-N-acetyl-alpha-D-glucosamine site is built by glycine 136, glutamate 150, asparagine 165, and asparagine 222. Mg(2+) is bound at residue asparagine 222. The segment at 225-245 (FALSKAETIIQNEIKENLMKN) is linker. The N-acetyltransferase stretch occupies residues 246 to 432 (GVLMRLPESI…FFAKFFKEIK (187 aa)). The UDP-N-acetyl-alpha-D-glucosamine site is built by arginine 309 and lysine 326. Histidine 337 serves as the catalytic Proton acceptor. UDP-N-acetyl-alpha-D-glucosamine is bound by residues tyrosine 340 and asparagine 351. Acetyl-CoA-binding positions include 360–361 (NY), serine 379, alanine 397, and arginine 414.

It in the N-terminal section; belongs to the N-acetylglucosamine-1-phosphate uridyltransferase family. In the C-terminal section; belongs to the transferase hexapeptide repeat family. As to quaternary structure, homotrimer. The cofactor is Mg(2+).

The protein localises to the cytoplasm. The enzyme catalyses alpha-D-glucosamine 1-phosphate + acetyl-CoA = N-acetyl-alpha-D-glucosamine 1-phosphate + CoA + H(+). It carries out the reaction N-acetyl-alpha-D-glucosamine 1-phosphate + UTP + H(+) = UDP-N-acetyl-alpha-D-glucosamine + diphosphate. Its pathway is nucleotide-sugar biosynthesis; UDP-N-acetyl-alpha-D-glucosamine biosynthesis; N-acetyl-alpha-D-glucosamine 1-phosphate from alpha-D-glucosamine 6-phosphate (route II): step 2/2. It participates in nucleotide-sugar biosynthesis; UDP-N-acetyl-alpha-D-glucosamine biosynthesis; UDP-N-acetyl-alpha-D-glucosamine from N-acetyl-alpha-D-glucosamine 1-phosphate: step 1/1. It functions in the pathway bacterial outer membrane biogenesis; LPS lipid A biosynthesis. Its function is as follows. Catalyzes the last two sequential reactions in the de novo biosynthetic pathway for UDP-N-acetylglucosamine (UDP-GlcNAc). The C-terminal domain catalyzes the transfer of acetyl group from acetyl coenzyme A to glucosamine-1-phosphate (GlcN-1-P) to produce N-acetylglucosamine-1-phosphate (GlcNAc-1-P), which is converted into UDP-GlcNAc by the transfer of uridine 5-monophosphate (from uridine 5-triphosphate), a reaction catalyzed by the N-terminal domain. In Campylobacter hominis (strain ATCC BAA-381 / DSM 21671 / CCUG 45161 / LMG 19568 / NCTC 13146 / CH001A), this protein is Bifunctional protein GlmU.